The sequence spans 1068 residues: Phosphatidylinositol 4,5-bisphosphate 3-kinase catalytic subunit alpha isoform (1068 aa).

One can recognise a PI3K-ABD domain in the interval 16 to 105 (MPPRILVECL…QPFLKVIEPV (90 aa)). A PI3K-RBD domain is found at 187 to 289 (KGQIIVVIWV…GRMPNLMLMA (103 aa)). A C2 PI3K-type domain is found at 330–487 (INSALRIKIL…DWFSSVVKFP (158 aa)). Positions 517 to 694 (LARDNELREN…GLLLESYCRA (178 aa)) constitute a PIK helical domain. Residues 765-1051 (RLEECRIMSS…QMNDAHHGGW (287 aa)) enclose the PI3K/PI4K catalytic domain. Residues 771–777 (IMSSAKR) are G-loop. The segment at 912-920 (GIGDRHNSN) is catalytic loop. The tract at residues 931–957 (HIDFGHFLDHKKKKFGYKRERVPFVLT) is activation loop.

The protein belongs to the PI3/PI4-kinase family. Heterodimer of a catalytic subunit PIK3CA and a p85 regulatory subunit (PIK3R1, PIK3R2 or PIK3R3). Interacts with IRS1 in nuclear extracts. Interacts with RUFY3. Interacts with RASD2. Interacts with APPL1. Interacts with HRAS and KRAS. Interaction with HRAS/KRAS is required for PI3K pathway signaling and cell proliferation stimulated by EGF and FGF2. Interacts with FAM83B; activates the PI3K/AKT signaling cascade.

The enzyme catalyses L-seryl-[protein] + ATP = O-phospho-L-seryl-[protein] + ADP + H(+). The catalysed reaction is a 1,2-diacyl-sn-glycero-3-phospho-(1D-myo-inositol) + ATP = a 1,2-diacyl-sn-glycero-3-phospho-(1D-myo-inositol-3-phosphate) + ADP + H(+). It carries out the reaction a 1,2-diacyl-sn-glycero-3-phospho-(1D-myo-inositol-4,5-bisphosphate) + ATP = a 1,2-diacyl-sn-glycero-3-phospho-(1D-myo-inositol-3,4,5-trisphosphate) + ADP + H(+). It catalyses the reaction 1,2-dioctanoyl-sn-glycero-3-phospho-(1D-myo-inositol-4,5-bisphosphate) + ATP = 1,2-dioctanoyl-sn-glycero-3-phospho-(1D-myo-inositol-3,4,5-trisphosphate) + ADP + H(+). The enzyme catalyses 1-octadecanoyl-2-(5Z,8Z,11Z,14Z)-eicosatetraenoyl-sn-glycero-3-phospho-1D-myo-inositol 4,5-bisphosphate + ATP = 1-octadecanoyl-2-(5Z,8Z,11Z,14Z-eicosatetraenoyl)-sn-glycero-3-phospho-(1D-myo-inositol 3,4,5-triphosphate) + ADP + H(+). Its pathway is phospholipid metabolism; phosphatidylinositol phosphate biosynthesis. In terms of biological role, phosphoinositide-3-kinase (PI3K) phosphorylates phosphatidylinositol (PI) and its phosphorylated derivatives at position 3 of the inositol ring to produce 3-phosphoinositides. Uses ATP and PtdIns(4,5)P2 (phosphatidylinositol 4,5-bisphosphate) to generate phosphatidylinositol 3,4,5-trisphosphate (PIP3). PIP3 plays a key role by recruiting PH domain-containing proteins to the membrane, including AKT1 and PDPK1, activating signaling cascades involved in cell growth, survival, proliferation, motility and morphology. Participates in cellular signaling in response to various growth factors. Involved in the activation of AKT1 upon stimulation by receptor tyrosine kinases ligands such as EGF, insulin, IGF1, VEGFA and PDGF. Involved in signaling via insulin-receptor substrate (IRS) proteins. Essential in endothelial cell migration during vascular development through VEGFA signaling, possibly by regulating RhoA activity. Required for lymphatic vasculature development, possibly by binding to RAS and by activation by EGF and FGF2, but not by PDGF. Regulates invadopodia formation through the PDPK1-AKT1 pathway. Participates in cardiomyogenesis in embryonic stem cells through a AKT1 pathway. Participates in vasculogenesis in embryonic stem cells through PDK1 and protein kinase C pathway. In addition to its lipid kinase activity, it displays a serine-protein kinase activity that results in the autophosphorylation of the p85alpha regulatory subunit as well as phosphorylation of other proteins such as 4EBP1, H-Ras, the IL-3 beta c receptor and possibly others. Plays a role in the positive regulation of phagocytosis and pinocytosis. In Bos taurus (Bovine), this protein is Phosphatidylinositol 4,5-bisphosphate 3-kinase catalytic subunit alpha isoform (PIK3CA).